The chain runs to 552 residues: Terpene synthase 5 (552 aa).

Aspartate 307, aspartate 311, and glutamate 457 together coordinate Mg(2+). The DDXXD motif signature appears at aspartate 307 to aspartate 311.

This sequence belongs to the terpene synthase family. Mg(2+) serves as cofactor.

Functionally, catalyzes the cyclization of farnesyl diphosphate to multiple sesquiterpenes, such as olefins and sesquiterpene alcohols. This Ricinus communis (Castor bean) protein is Terpene synthase 5 (TPS5).